The sequence spans 316 residues: Transaldolase (316 aa).

Lys132 functions as the Schiff-base intermediate with substrate in the catalytic mechanism.

The protein belongs to the transaldolase family. Type 1 subfamily.

It localises to the cytoplasm. It catalyses the reaction D-sedoheptulose 7-phosphate + D-glyceraldehyde 3-phosphate = D-erythrose 4-phosphate + beta-D-fructose 6-phosphate. The protein operates within carbohydrate degradation; pentose phosphate pathway; D-glyceraldehyde 3-phosphate and beta-D-fructose 6-phosphate from D-ribose 5-phosphate and D-xylulose 5-phosphate (non-oxidative stage): step 2/3. Transaldolase is important for the balance of metabolites in the pentose-phosphate pathway. The polypeptide is Transaldolase (Vibrio cholerae serotype O1 (strain ATCC 39315 / El Tor Inaba N16961)).